Consider the following 147-residue polypeptide: Cytochrome c-type biogenesis protein CcmE (147 aa).

Residues 1-7 are Cytoplasmic-facing; it reads MTRKQKR. A helical; Signal-anchor for type II membrane protein membrane pass occupies residues 8-28; it reads LSVIVGGLAFLGAATGLTFYA. The Periplasmic segment spans residues 29-147; that stretch reads LGQKASYFYM…KGVWQESKSE (119 aa). 2 residues coordinate heme: His-122 and Tyr-126.

It belongs to the CcmE/CycJ family.

It localises to the cell inner membrane. Its function is as follows. Heme chaperone required for the biogenesis of c-type cytochromes. Transiently binds heme delivered by CcmC and transfers the heme to apo-cytochromes in a process facilitated by CcmF and CcmH. The chain is Cytochrome c-type biogenesis protein CcmE from Mesorhizobium japonicum (strain LMG 29417 / CECT 9101 / MAFF 303099) (Mesorhizobium loti (strain MAFF 303099)).